Consider the following 171-residue polypeptide: NADH-quinone oxidoreductase subunit B 1 (171 aa).

Residues C44, C45, C110, and C139 each coordinate [4Fe-4S] cluster.

Belongs to the complex I 20 kDa subunit family. NDH-1 is composed of 14 different subunits. Subunits NuoB, C, D, E, F, and G constitute the peripheral sector of the complex. [4Fe-4S] cluster serves as cofactor.

It is found in the cell inner membrane. The enzyme catalyses a quinone + NADH + 5 H(+)(in) = a quinol + NAD(+) + 4 H(+)(out). In terms of biological role, NDH-1 shuttles electrons from NADH, via FMN and iron-sulfur (Fe-S) centers, to quinones in the respiratory chain. The immediate electron acceptor for the enzyme in this species is believed to be ubiquinone. Couples the redox reaction to proton translocation (for every two electrons transferred, four hydrogen ions are translocated across the cytoplasmic membrane), and thus conserves the redox energy in a proton gradient. The chain is NADH-quinone oxidoreductase subunit B 1 from Opitutus terrae (strain DSM 11246 / JCM 15787 / PB90-1).